A 401-amino-acid chain; its full sequence is S-adenosylmethionine synthase (401 aa).

Residue 136 to 141 (GQGSVD) participates in ATP binding.

The protein belongs to the AdoMet synthase 2 family. Mg(2+) is required as a cofactor.

The enzyme catalyses L-methionine + ATP + H2O = S-adenosyl-L-methionine + phosphate + diphosphate. It functions in the pathway amino-acid biosynthesis; S-adenosyl-L-methionine biosynthesis; S-adenosyl-L-methionine from L-methionine: step 1/1. Its function is as follows. Catalyzes the formation of S-adenosylmethionine from methionine and ATP. This Pyrococcus furiosus (strain ATCC 43587 / DSM 3638 / JCM 8422 / Vc1) protein is S-adenosylmethionine synthase.